The following is a 513-amino-acid chain: ATP synthase subunit alpha (513 aa).

Position 169 to 176 (169 to 176 (GDRQTGKT)) interacts with ATP.

The protein belongs to the ATPase alpha/beta chains family. As to quaternary structure, F-type ATPases have 2 components, CF(1) - the catalytic core - and CF(0) - the membrane proton channel. CF(1) has five subunits: alpha(3), beta(3), gamma(1), delta(1), epsilon(1). CF(0) has three main subunits: a(1), b(2) and c(9-12). The alpha and beta chains form an alternating ring which encloses part of the gamma chain. CF(1) is attached to CF(0) by a central stalk formed by the gamma and epsilon chains, while a peripheral stalk is formed by the delta and b chains.

It localises to the cell inner membrane. The enzyme catalyses ATP + H2O + 4 H(+)(in) = ADP + phosphate + 5 H(+)(out). Functionally, produces ATP from ADP in the presence of a proton gradient across the membrane. The alpha chain is a regulatory subunit. The protein is ATP synthase subunit alpha of Shewanella sp. (strain ANA-3).